The chain runs to 587 residues: 5-aminolevulinate synthase, erythroid-specific, mitochondrial (587 aa).

A mitochondrion-targeting transit peptide spans 1 to 49; it reads MVAAAMLLRSCPVLSKGPTGLLGKVAKTYQFLFGIGRCPILATQGPTCS. Arg163 contacts succinyl-CoA. Pyridoxal 5'-phosphate-binding residues include Cys258 and Phe259. Succinyl-CoA-binding residues include Ser280 and Lys299. Pyridoxal 5'-phosphate contacts are provided by Ser332, His360, and Thr388. Lys391 is a catalytic residue. Lys391 carries the post-translational modification N6-(pyridoxal phosphate)lysine. Pyridoxal 5'-phosphate contacts are provided by Thr420 and Thr421. Thr508 contacts succinyl-CoA.

Belongs to the class-II pyridoxal-phosphate-dependent aminotransferase family. In terms of assembly, homodimer. Interacts with SUCLA2. Pyridoxal 5'-phosphate serves as cofactor. As to expression, erythroid-specific.

It localises to the mitochondrion inner membrane. It carries out the reaction succinyl-CoA + glycine + H(+) = 5-aminolevulinate + CO2 + CoA. It participates in porphyrin-containing compound metabolism; protoporphyrin-IX biosynthesis; 5-aminolevulinate from glycine: step 1/1. Its function is as follows. Catalyzes the pyridoxal 5'-phosphate (PLP)-dependent condensation of succinyl-CoA and glycine to form aminolevulinic acid (ALA), with CoA and CO2 as by-products. Contributes significantly to heme formation during erythropoiesis. The polypeptide is 5-aminolevulinate synthase, erythroid-specific, mitochondrial (Alas2) (Rattus norvegicus (Rat)).